The sequence spans 220 residues: Adenylate kinase (220 aa).

Residue 10 to 15 (GAGKGT) participates in ATP binding. The tract at residues 30–59 (STGDMLRAAVKAGTPLGVEAKTYMDEGKLV) is NMP. Residues Thr31, Arg36, 57 to 59 (KLV), 85 to 88 (GFPR), and Gln92 each bind AMP. The interval 122–159 (GRRTHPASGRTYHVKFNPPKVEGKDDVTGEPLVQRDDD) is LID. ATP-binding positions include Arg123 and 132–133 (TY). 2 residues coordinate AMP: Arg156 and Arg167. Gly206 lines the ATP pocket.

Belongs to the adenylate kinase family. As to quaternary structure, monomer.

The protein resides in the cytoplasm. It carries out the reaction AMP + ATP = 2 ADP. It participates in purine metabolism; AMP biosynthesis via salvage pathway; AMP from ADP: step 1/1. In terms of biological role, catalyzes the reversible transfer of the terminal phosphate group between ATP and AMP. Plays an important role in cellular energy homeostasis and in adenine nucleotide metabolism. The polypeptide is Adenylate kinase (Burkholderia mallei (strain NCTC 10247)).